The following is a 109-amino-acid chain: Acylphosphatase (109 aa).

The 88-residue stretch at R22 to Y109 folds into the Acylphosphatase-like domain. Residues R37 and N55 contribute to the active site.

It belongs to the acylphosphatase family.

It catalyses the reaction an acyl phosphate + H2O = a carboxylate + phosphate + H(+). This Arthrobacter sp. (strain FB24) protein is Acylphosphatase (acyP).